The chain runs to 511 residues: Glucose-1-phosphate adenylyltransferase large subunit 1, chloroplastic/amyloplastic (511 aa).

Residues 1 to 58 constitute a chloroplast transit peptide; that stretch reads MAAMDLRVAAPASVAAAARCGTSLARPWPARAVGGGGGGGGRGRRLSVRTSVATTEAA.

It belongs to the bacterial/plant glucose-1-phosphate adenylyltransferase family. In terms of assembly, heterotetramer composed of two small and two large subunits. Expressed in leaves and stems.

The protein resides in the plastid. It is found in the chloroplast. Its subcellular location is the amyloplast. It carries out the reaction alpha-D-glucose 1-phosphate + ATP + H(+) = ADP-alpha-D-glucose + diphosphate. Its pathway is glycan biosynthesis; starch biosynthesis. Its activity is regulated as follows. Activated by 3'phosphoglycerate, inhibited by orthophosphate. Allosteric regulation. In terms of biological role, involved in synthesis of starch. Catalyzes the synthesis of ADP-glucose, a molecule that serves as an activated glycosyl donor for alpha-1,4-glucan synthesis. Essential for starch synthesis in leaf chloroplasts and endosperm amyloplasts. This chain is Glucose-1-phosphate adenylyltransferase large subunit 1, chloroplastic/amyloplastic, found in Oryza sativa subsp. japonica (Rice).